Here is a 113-residue protein sequence, read N- to C-terminus: MTMEAKAILRTARISPQKARLVADQVRGLSAERAVNLLKFSDKKAAHLIKKVVESAIANAENNQGADVDELKVKTIMVDEGPSLKRFMARAKGRGTRILKRTSHITVVVGAAK.

The protein belongs to the universal ribosomal protein uL22 family. In terms of assembly, part of the 50S ribosomal subunit.

Functionally, this protein binds specifically to 23S rRNA; its binding is stimulated by other ribosomal proteins, e.g. L4, L17, and L20. It is important during the early stages of 50S assembly. It makes multiple contacts with different domains of the 23S rRNA in the assembled 50S subunit and ribosome. The globular domain of the protein is located near the polypeptide exit tunnel on the outside of the subunit, while an extended beta-hairpin is found that lines the wall of the exit tunnel in the center of the 70S ribosome. The protein is Large ribosomal subunit protein uL22 of Xanthomonas axonopodis pv. citri (strain 306).